Here is a 273-residue protein sequence, read N- to C-terminus: Shikimate dehydrogenase (NADP(+)) (273 aa).

Shikimate contacts are provided by residues 14-16 and Thr61; that span reads SKS. Lys65 serves as the catalytic Proton acceptor. The shikimate site is built by Asn86 and Asp102. NADP(+) contacts are provided by residues 126–130, 150–155, and Met213; these read GAGGA and NRTHAR. Tyr215 is a binding site for shikimate. Gly237 provides a ligand contact to NADP(+).

It belongs to the shikimate dehydrogenase family. As to quaternary structure, homodimer.

The enzyme catalyses shikimate + NADP(+) = 3-dehydroshikimate + NADPH + H(+). It functions in the pathway metabolic intermediate biosynthesis; chorismate biosynthesis; chorismate from D-erythrose 4-phosphate and phosphoenolpyruvate: step 4/7. Functionally, involved in the biosynthesis of the chorismate, which leads to the biosynthesis of aromatic amino acids. Catalyzes the reversible NADPH linked reduction of 3-dehydroshikimate (DHSA) to yield shikimate (SA). The protein is Shikimate dehydrogenase (NADP(+)) of Aeromonas hydrophila subsp. hydrophila (strain ATCC 7966 / DSM 30187 / BCRC 13018 / CCUG 14551 / JCM 1027 / KCTC 2358 / NCIMB 9240 / NCTC 8049).